The sequence spans 168 residues: Sec-independent protein translocase protein TatB (168 aa).

A helical transmembrane segment spans residues 1–21; sequence MIDLGISKLALIGAVALIVIG. 2 disordered regions span residues 92–132 and 146–168; these read FDGS…QGAR and VQSGAARVKRHRPASGRNRSFFE. Residues 94 to 107 are compositionally biased toward low complexity; sequence GSASSSSSSDTGSG. Residues 117-126 are compositionally biased toward basic residues; sequence KSHNGRKSWR.

The protein belongs to the TatB family. The Tat system comprises two distinct complexes: a TatABC complex, containing multiple copies of TatA, TatB and TatC subunits, and a separate TatA complex, containing only TatA subunits. Substrates initially bind to the TatABC complex, which probably triggers association of the separate TatA complex to form the active translocon.

The protein localises to the cell inner membrane. Part of the twin-arginine translocation (Tat) system that transports large folded proteins containing a characteristic twin-arginine motif in their signal peptide across membranes. Together with TatC, TatB is part of a receptor directly interacting with Tat signal peptides. TatB may form an oligomeric binding site that transiently accommodates folded Tat precursor proteins before their translocation. This Cupriavidus metallidurans (strain ATCC 43123 / DSM 2839 / NBRC 102507 / CH34) (Ralstonia metallidurans) protein is Sec-independent protein translocase protein TatB.